Consider the following 113-residue polypeptide: Neocarzinostatin (113 aa).

2 disulfide bridges follow: cysteine 37–cysteine 47 and cysteine 88–cysteine 93.

The protein belongs to the neocarzinostatin family.

NCS has antibiotic activity (for Gram-positive bacteria) and antitumor activity (for certain mouse tumors). NCS binds non-covalently to a chromophore which is the cytotoxic and mutagenic component of the antibiotic. The chromophore binds to DNA as a weak intercalator and causes single- and double-strand breaks. The protein is Neocarzinostatin (ncsA) of Streptomyces malayensis.